Here is a 2180-residue protein sequence, read N- to C-terminus: DNA polymerase epsilon catalytic subunit A (2180 aa).

4 residues coordinate Zn(2+): Cys-2067, Cys-2070, Cys-2089, and Cys-2092. The segment at 2067 to 2092 adopts a CysA-type zinc-finger fold; the sequence is CENCAYFSDLDICMSDLRSMFKCSKC. The [4Fe-4S] cluster site is built by Cys-2123, Cys-2126, Cys-2138, and Cys-2140. Residues 2123-2140 carry the CysB motif motif; that stretch reads CAKCRKIKSDTMSAYCTC.

It belongs to the DNA polymerase type-B family. As to quaternary structure, heterotetramer. Consists of 4 subunits: POL2, DPB2, DPB3 and DPB4. [4Fe-4S] cluster is required as a cofactor.

It localises to the nucleus. It carries out the reaction DNA(n) + a 2'-deoxyribonucleoside 5'-triphosphate = DNA(n+1) + diphosphate. Functionally, DNA polymerase II participates in chromosomal DNA replication. In Eremothecium gossypii (strain ATCC 10895 / CBS 109.51 / FGSC 9923 / NRRL Y-1056) (Yeast), this protein is DNA polymerase epsilon catalytic subunit A (POL2).